Reading from the N-terminus, the 353-residue chain is Photosystem II D2 protein (353 aa).

Threonine 2 carries the post-translational modification N-acetylthreonine. Phosphothreonine is present on threonine 2. Residues 41-61 (CAYFALGGWFTGTTFVTSWYT) traverse the membrane as a helical segment. Histidine 118 contributes to the chlorophyll a binding site. Residues 125–141 (GFMLRQFELARSVQLRP) traverse the membrane as a helical segment. Residues glutamine 130 and asparagine 143 each coordinate pheophytin a. Residues 153-166 (VFVSVFLIYPLGQS) form a helical membrane-spanning segment. A chlorophyll a-binding site is contributed by histidine 198. A helical membrane pass occupies residues 208–228 (AALLCAIHGATVENTLFEDGD). A plastoquinone contacts are provided by histidine 215 and phenylalanine 262. Residue histidine 215 coordinates Fe cation. Histidine 269 contacts Fe cation. A helical transmembrane segment spans residues 279-295 (GLWMSAIGVVGLALNLR).

It belongs to the reaction center PufL/M/PsbA/D family. PSII is composed of 1 copy each of membrane proteins PsbA, PsbB, PsbC, PsbD, PsbE, PsbF, PsbH, PsbI, PsbJ, PsbK, PsbL, PsbM, PsbT, PsbX, PsbY, PsbZ, Psb30/Ycf12, at least 3 peripheral proteins of the oxygen-evolving complex and a large number of cofactors. It forms dimeric complexes. It depends on The D1/D2 heterodimer binds P680, chlorophylls that are the primary electron donor of PSII, and subsequent electron acceptors. It shares a non-heme iron and each subunit binds pheophytin, quinone, additional chlorophylls, carotenoids and lipids. There is also a Cl(-1) ion associated with D1 and D2, which is required for oxygen evolution. The PSII complex binds additional chlorophylls, carotenoids and specific lipids. as a cofactor.

The protein localises to the plastid. It localises to the chloroplast thylakoid membrane. It carries out the reaction 2 a plastoquinone + 4 hnu + 2 H2O = 2 a plastoquinol + O2. Photosystem II (PSII) is a light-driven water:plastoquinone oxidoreductase that uses light energy to abstract electrons from H(2)O, generating O(2) and a proton gradient subsequently used for ATP formation. It consists of a core antenna complex that captures photons, and an electron transfer chain that converts photonic excitation into a charge separation. The D1/D2 (PsbA/PsbD) reaction center heterodimer binds P680, the primary electron donor of PSII as well as several subsequent electron acceptors. D2 is needed for assembly of a stable PSII complex. The chain is Photosystem II D2 protein from Saccharum hybrid (Sugarcane).